We begin with the raw amino-acid sequence, 1276 residues long: Probable histone acetyltransferase HAC-like 3 (1276 aa).

The segment at valine 391–lysine 421 is disordered. Polar residues predominate over residues glutamine 396 to serine 413. The PHD-type zinc finger occupies serine 621–lysine 689. Residues isoleucine 704–cysteine 1130 enclose the CBP/p300-type HAT domain. Acetyl-CoA-binding positions include isoleucine 827–serine 829, arginine 846–threonine 847, and tryptophan 902. Positions glutamate 953–leucine 973 form a coiled coil. ZZ-type zinc fingers lie at residues cysteine 1013–leucine 1076 and leucine 1125–tyrosine 1187. Zn(2+) contacts are provided by cysteine 1018, cysteine 1021, cysteine 1033, cysteine 1036, cysteine 1042, cysteine 1045, histidine 1058, histidine 1066, cysteine 1130, cysteine 1133, cysteine 1145, cysteine 1148, cysteine 1154, cysteine 1157, histidine 1168, and histidine 1177. The segment at histidine 1177–isoleucine 1260 adopts a TAZ-type zinc-finger fold.

The protein resides in the nucleus. It catalyses the reaction L-lysyl-[protein] + acetyl-CoA = N(6)-acetyl-L-lysyl-[protein] + CoA + H(+). Acetyltransferase enzyme. Acetylates histones, giving a specific tag for transcriptional activation. The polypeptide is Probable histone acetyltransferase HAC-like 3 (Oryza sativa subsp. japonica (Rice)).